Consider the following 518-residue polypeptide: Bifunctional purine biosynthesis protein PurH (518 aa).

In terms of domain architecture, MGS-like spans 1-146; it reads MSPIALLSVS…KNHQDVLVVT (146 aa).

This sequence belongs to the PurH family.

It catalyses the reaction (6R)-10-formyltetrahydrofolate + 5-amino-1-(5-phospho-beta-D-ribosyl)imidazole-4-carboxamide = 5-formamido-1-(5-phospho-D-ribosyl)imidazole-4-carboxamide + (6S)-5,6,7,8-tetrahydrofolate. The catalysed reaction is IMP + H2O = 5-formamido-1-(5-phospho-D-ribosyl)imidazole-4-carboxamide. The protein operates within purine metabolism; IMP biosynthesis via de novo pathway; 5-formamido-1-(5-phospho-D-ribosyl)imidazole-4-carboxamide from 5-amino-1-(5-phospho-D-ribosyl)imidazole-4-carboxamide (10-formyl THF route): step 1/1. Its pathway is purine metabolism; IMP biosynthesis via de novo pathway; IMP from 5-formamido-1-(5-phospho-D-ribosyl)imidazole-4-carboxamide: step 1/1. This Prochlorococcus marinus (strain NATL1A) protein is Bifunctional purine biosynthesis protein PurH.